A 392-amino-acid chain; its full sequence is ABSCISIC ACID-INSENSITIVE 5-like protein 4 (392 aa).

The tract at residues 1–22 (MGTHIDINNLGGDTSRGNESKP) is disordered. Serine 28, serine 50, and serine 96 each carry phosphoserine. A Phosphothreonine modification is found at threonine 135. The tract at residues 266-297 (NMGGAGGTVTATSPGTSSAENNTWSSPVPYVF) is disordered. The segment covering 274–291 (VTATSPGTSSAENNTWSS) has biased composition (polar residues). The region spanning 311–374 (VERRQKRMIK…NSELKEFSKQ (64 aa)) is the bZIP domain. The basic motif stretch occupies residues 313 to 332 (RRQKRMIKNRESAARSRARK). Positions 339-360 (LEAEIESLKLVNQDLQKKQAEI) are leucine-zipper.

It belongs to the bZIP family. ABI5 subfamily. DNA-binding heterodimer. Interacts with ABI3 and the AFP proteins AFP1, AFP2, AFP3 and AFP4. Post-translationally, phosphorylated by CPK4, CPK11, SRK2D and SRK2I in vitro.

It localises to the nucleus. Functionally, binds to the ABA-responsive element (ABRE). Could participate in abscisic acid-regulated gene expression. The polypeptide is ABSCISIC ACID-INSENSITIVE 5-like protein 4 (ABF1) (Arabidopsis thaliana (Mouse-ear cress)).